The following is a 317-amino-acid chain: Putative 2-hydroxyacid dehydrogenase SAOUHSC_02577 (317 aa).

Residues 155–156 (EI), 234–236 (ASR), and aspartate 260 each bind NAD(+). The active site involves arginine 236. Glutamate 265 is an active-site residue. The active-site Proton donor is the histidine 283. NAD(+) is bound at residue 283 to 286 (HIGN).

The protein belongs to the D-isomer specific 2-hydroxyacid dehydrogenase family.

This Staphylococcus aureus (strain NCTC 8325 / PS 47) protein is Putative 2-hydroxyacid dehydrogenase SAOUHSC_02577.